A 473-amino-acid polypeptide reads, in one-letter code: MATATEQWVLVEMVQALYEAPAYHLILEGILILWIIRLLFSKTYKLQERSDLTVKEKEELIEEWQPEPLVPPVPKDHPALNYNIVSGPPSHKIVVNGKECINFASFNFLGLLDNPRVKAAALASLKKYGVGTCGPRGFYGTFDVHLDLEDRLAKFMKTEEAIIYSYGFATIASAIPAYSKRGDIVFVDRAACFAIQKGLQASRSDIKLFKHNDMADLERLLKEQEIEDQKNPRKARVTRRFIVVEGLYMNTGTICPLPELVKLKYKYKARIFLEESLSFGVLGEHGRGVTEHYGINIDDIDLISANMENALASIGGFCCGRSFVIDHQRLSGQGYCFSASLPPLLAAAAIEALNIMEENPGIFAVLKEKCRQIHKALQGISGLKVVGESLSPAFHLQLEESTGSREQDVRLLQEIVDQCMDRSIALTQARYLEKEEKCLPPPSIRVVVTVEQTAEELERAASTIKEVAQAVLL.

Over 1–15 the chain is Lumenal; that stretch reads MATATEQWVLVEMVQ. The interval 1 to 66 is interaction with SPTLC2; it reads MATATEQWVL…KEELIEEWQP (66 aa). A helical transmembrane segment spans residues 16–36; that stretch reads ALYEAPAYHLILEGILILWII. The Cytoplasmic segment spans residues 37–473; sequence RLLFSKTYKL…IKEVAQAVLL (437 aa). Tyr164 is subject to Phosphotyrosine; by ABL.

The protein belongs to the class-II pyridoxal-phosphate-dependent aminotransferase family. Component of the serine palmitoyltransferase (SPT) complex, which is also composed of SPTLC2 or SPTLC3 and SPTSSA or SPTSSB. The heterodimer with SPTLC2 or SPTLC3 forms the catalytic core of the enzyme, while SPTSSA or SPTSSB subunits determine substrate specificity. SPT also interacts with ORMDL proteins, especially ORMDL3, which negatively regulate SPT activity in the presence of ceramides. Forms dimers of heterodimers with SPTLC2. Interacts with RTN4. Pyridoxal 5'-phosphate is required as a cofactor. Phosphorylation at Tyr-164 inhibits activity and promotes cell survival.

The protein resides in the endoplasmic reticulum membrane. It catalyses the reaction L-serine + hexadecanoyl-CoA + H(+) = 3-oxosphinganine + CO2 + CoA. The enzyme catalyses octadecanoyl-CoA + L-serine + H(+) = 3-oxoeicosasphinganine + CO2 + CoA. It carries out the reaction tetradecanoyl-CoA + L-serine + H(+) = 3-oxohexadecasphinganine + CO2 + CoA. The catalysed reaction is dodecanoyl-CoA + L-serine + H(+) = 3-oxotetradecasphinganine + CO2 + CoA. It functions in the pathway lipid metabolism; sphingolipid metabolism. With respect to regulation, SPT complex catalytic activity is negatively regulated by ORMDL proteins, including ORMDL3, in the presence of ceramides. This mechanism allows to maintain ceramide levels at sufficient concentrations for the production of complex sphingolipids, but which prevents the accumulation of ceramides to levels that trigger apoptosis. Functionally, component of the serine palmitoyltransferase multisubunit enzyme (SPT) that catalyzes the initial and rate-limiting step in sphingolipid biosynthesis by condensing L-serine and activated acyl-CoA (most commonly palmitoyl-CoA) to form long-chain bases. The SPT complex is also composed of SPTLC2 or SPTLC3 and SPTSSA or SPTSSB. Within this complex, the heterodimer with SPTLC2 or SPTLC3 forms the catalytic core. The composition of the serine palmitoyltransferase (SPT) complex determines the substrate preference. The SPTLC1-SPTLC2-SPTSSA complex shows a strong preference for C16-CoA substrate, while the SPTLC1-SPTLC3-SPTSSA isozyme uses both C14-CoA and C16-CoA as substrates, with a slight preference for C14-CoA. The SPTLC1-SPTLC2-SPTSSB complex shows a strong preference for C18-CoA substrate, while the SPTLC1-SPTLC3-SPTSSB isozyme displays an ability to use a broader range of acyl-CoAs, without apparent preference. Required for adipocyte cell viability and metabolic homeostasis. This is Serine palmitoyltransferase 1 (SPTLC1) from Macaca fascicularis (Crab-eating macaque).